An 81-amino-acid polypeptide reads, in one-letter code: Photosystem I iron-sulfur center (81 aa).

4Fe-4S ferredoxin-type domains lie at 2–31 and 39–68; these read SHSVKIYDTCIGCTQCVRACPTDVLEMIPW and IASAPRTEDCVGCKRCESACPTDFLSVRVY. Residues C11, C14, C17, C21, C48, C51, C54, and C58 each contribute to the [4Fe-4S] cluster site.

In terms of assembly, the eukaryotic PSI reaction center is composed of at least 11 subunits. [4Fe-4S] cluster serves as cofactor.

It is found in the plastid. The protein resides in the chloroplast thylakoid membrane. The catalysed reaction is reduced [plastocyanin] + hnu + oxidized [2Fe-2S]-[ferredoxin] = oxidized [plastocyanin] + reduced [2Fe-2S]-[ferredoxin]. Functionally, apoprotein for the two 4Fe-4S centers FA and FB of photosystem I (PSI); essential for photochemical activity. FB is the terminal electron acceptor of PSI, donating electrons to ferredoxin. The C-terminus interacts with PsaA/B/D and helps assemble the protein into the PSI complex. Required for binding of PsaD and PsaE to PSI. PSI is a plastocyanin-ferredoxin oxidoreductase, converting photonic excitation into a charge separation, which transfers an electron from the donor P700 chlorophyll pair to the spectroscopically characterized acceptors A0, A1, FX, FA and FB in turn. This Vitis vinifera (Grape) protein is Photosystem I iron-sulfur center.